Consider the following 60-residue polypeptide: uncharacterized protein (60 aa).

This is an uncharacterized protein from Escherichia coli O157:H7.